Consider the following 285-residue polypeptide: MLYLTKISNAGSEFTENEQKIADFLQANVSELQSVSSRQMAKQLGISQSSIVKFAQKLGAQGFTELRMALIGEYSASREKTNATALHLHSSITSDDSLEVIARKLNREKELALEQTCALLDYARLQKIIEVISKAPFIQITGLGGSALVGRDLSFKLMKIGYRVACEADTHVQATVSQALKKGDVQIAISYSGSKKEIVLCAEAARKQGATVIAITSLTDSPLRRLAHFTLDTVSGETEWRSSSMSTRTAQNSVTDLLFVGLVQLNDVESLKMIQRSSELTQRLK.

Residues 1-77 enclose the HTH rpiR-type domain; it reads MLYLTKISNA…MALIGEYSAS (77 aa). Positions 37 to 56 form a DNA-binding region, H-T-H motif; sequence SRQMAKQLGISQSSIVKFAQ. The region spanning 128 to 268 is the SIS domain; that stretch reads IIEVISKAPF…FVGLVQLNDV (141 aa).

As to quaternary structure, homotetramer.

Its pathway is amino-sugar metabolism; N-acetylmuramate degradation [regulation]. Represses the expression of the murPQ operon involved in the uptake and degradation of N-acetylmuramic acid (MurNAc). Binds to two adjacent inverted repeats within the operator region. MurNAc 6-phosphate, the substrate of MurQ, is the specific inducer that weakens binding of MurR to the operator. The chain is HTH-type transcriptional regulator MurR from Escherichia coli (strain K12 / MC4100 / BW2952).